The sequence spans 346 residues: NADH-quinone oxidoreductase subunit H (346 aa).

A run of 9 helical transmembrane segments spans residues 13-33, 51-71, 83-103, 116-136, 162-182, 191-211, 244-264, 278-298, and 310-330; these read ILLI…ALAF, PNVV…KYIV, AVYF…WAVI, VAVL…IMGG, IGLI…TAIV, LLNW…ISAL, FMIG…LLFF, VFWM…VKAI, and LGWK…AFMA.

The protein belongs to the complex I subunit 1 family. In terms of assembly, NDH-1 is composed of 14 different subunits. Subunits NuoA, H, J, K, L, M, N constitute the membrane sector of the complex.

The protein resides in the cell inner membrane. The catalysed reaction is a quinone + NADH + 5 H(+)(in) = a quinol + NAD(+) + 4 H(+)(out). In terms of biological role, NDH-1 shuttles electrons from NADH, via FMN and iron-sulfur (Fe-S) centers, to quinones in the respiratory chain. The immediate electron acceptor for the enzyme in this species is believed to be ubiquinone. Couples the redox reaction to proton translocation (for every two electrons transferred, four hydrogen ions are translocated across the cytoplasmic membrane), and thus conserves the redox energy in a proton gradient. This subunit may bind ubiquinone. The chain is NADH-quinone oxidoreductase subunit H from Jannaschia sp. (strain CCS1).